Consider the following 125-residue polypeptide: Small ribosomal subunit protein uS13 (125 aa).

Belongs to the universal ribosomal protein uS13 family. In terms of assembly, part of the 30S ribosomal subunit. Forms a loose heterodimer with protein S19. Forms two bridges to the 50S subunit in the 70S ribosome.

Located at the top of the head of the 30S subunit, it contacts several helices of the 16S rRNA. In the 70S ribosome it contacts the 23S rRNA (bridge B1a) and protein L5 of the 50S subunit (bridge B1b), connecting the 2 subunits; these bridges are implicated in subunit movement. Contacts the tRNAs in the A and P-sites. The chain is Small ribosomal subunit protein uS13 from Orientia tsutsugamushi (strain Boryong) (Rickettsia tsutsugamushi).